We begin with the raw amino-acid sequence, 186 residues long: Small ribosomal subunit protein uS4 (186 aa).

One can recognise an S4 RNA-binding domain in the interval 106–170 (RRLQTIVYRK…SPLKDEDHPI (65 aa)). The tract at residues 151–186 (EEEEVDYSPYSPLKDEDHPIRCEARGESPEETAAEE) is disordered. The span at 163-178 (LKDEDHPIRCEARGES) shows a compositional bias: basic and acidic residues.

It belongs to the universal ribosomal protein uS4 family. In terms of assembly, part of the 30S ribosomal subunit. Contacts protein S5. The interaction surface between S4 and S5 is involved in control of translational fidelity.

Functionally, one of the primary rRNA binding proteins, it binds directly to 16S rRNA where it nucleates assembly of the body of the 30S subunit. Its function is as follows. With S5 and S12 plays an important role in translational accuracy. This Methanopyrus kandleri (strain AV19 / DSM 6324 / JCM 9639 / NBRC 100938) protein is Small ribosomal subunit protein uS4.